We begin with the raw amino-acid sequence, 399 residues long: Peroxisome assembly protein 12 (399 aa).

The disordered stretch occupies residues 1 to 24; the sequence is MSFYSNLPSAGQSSRGSSTSGRNG. The Peroxisomal matrix portion of the chain corresponds to 1–33; the sequence is MSFYSNLPSAGQSSRGSSTSGRNGVGLEPLYPT. Positions 9–24 are enriched in low complexity; the sequence is SAGQSSRGSSTSGRNG. A helical membrane pass occupies residues 34–62; sequence IFEIMSSQEIDSLLPASIRYLLANHLVAN. At 63 to 67 the chain is on the cytoplasmic side; the sequence is FPNRY. The helical transmembrane segment at 68 to 92 threads the bilayer; it reads TLRLNKYFFEWFQAIKGFVEWYHLK. Residues 93 to 136 lie on the Peroxisomal matrix side of the membrane; the sequence is TYNSTFIDRFYGLQLFSSRDRNLALTQCLNPKGQSEWPQGLQLN. Residues 137–168 form a helical membrane-spanning segment; it reads QQQKSVIFLEKIILPYITAKLDEILEKISMNN. Topologically, residues 169–171 are cytoplasmic; it reads IFS. Residues 172–208 form a helical membrane-spanning segment; sequence SDETENKWPKRAFLRIYPFIKKLLALSNLLVKLLFLT. Residues 209–277 are Peroxisomal matrix-facing; sequence KRTGSVSLLQ…PRFLTFMGSQ (69 aa). A helical transmembrane segment spans residues 278–305; it reads FFPTFIFVLRVYQWWTTQDMTTKLQKRV. Over 306–399 the chain is Cytoplasmic; the sequence is NDLDEDIPRP…VVTGIRKLLI (94 aa). Zn(2+)-binding residues include C334, C337, C354, and C357. The RING-type; degenerate zinc finger occupies 334-373; it reads CPVCEKTVQNPCVLETGYVACYPCAISYLVNNEGHCPVTN.

The protein belongs to the pex2/pex10/pex12 family. As to quaternary structure, component of the PEX2-PEX10-PEX12 retrotranslocation channel, composed of PEX2, PEX10 and PEX12.

The protein localises to the peroxisome membrane. It participates in protein modification; protein ubiquitination. Its function is as follows. Component of a retrotranslocation channel required for peroxisome organization by mediating export of the PEX5 receptor from peroxisomes to the cytosol, thereby promoting PEX5 recycling. The retrotranslocation channel is composed of PEX2, PEX10 and PEX12; each subunit contributing transmembrane segments that coassemble into an open channel that specifically allows the passage of PEX5 through the peroxisomal membrane. PEX12 also regulates PEX5 recycling by activating the E3 ubiquitin-protein ligase activity of PEX10. When PEX5 recycling is compromised, PEX12 stimulates PEX10-mediated polyubiquitination of PEX5, leading to its subsequent degradation. This chain is Peroxisome assembly protein 12, found in Saccharomyces cerevisiae (strain ATCC 204508 / S288c) (Baker's yeast).